A 69-amino-acid polypeptide reads, in one-letter code: Alpha-conotoxin SrIA/SrIB (69 aa).

Positions 1–21 (MGMRMMFTVFLLVVLATTVVS) are cleaved as a signal peptide. The propeptide occupies 22–48 (FTSDSAFDSRNVAANDKVSDMIALTAR). Intrachain disulfides connect C51–C57 and C52–C65. The interval 53–55 (SRP) is ser-Xaa-Pro motif, crucial for potent interaction with nAChR. Position 55 is a 4-hydroxyproline; in form Sr1A and Sr1B (P55). E60 bears the 4-carboxyglutamate; in form Sr1A mark. 4-carboxyglutamate; in form Sr1A and Sr1B is present on E63. G66 is modified (glycine amide; in form Sr1A and Sr1B).

Belongs to the conotoxin A superfamily. In terms of processing, occurs in 2 forms which differ in the post-translational modification of Glu-60. In form SrA1 Glu-60 is 4-carboxyglutamate while in form SrA2 Glu-60 is unmodified. In terms of tissue distribution, expressed by the venom duct.

Its subcellular location is the secreted. Functionally, alpha-conotoxins act on postsynaptic membranes, they bind to the nicotinic acetylcholine receptors (nAChR) and thus inhibit them. Has weak blocking effects on muscle nAChR composed of alpha-1/beta-1/gamma/delta subunits and the central nervous system nAChR composed of alpha-4/beta-2 subunits. Does not detectably affect the peripheral nervous system nAChR composed of alpha-3/beta-4 subunits. Low toxin concentrations potentiate currents in muscle nAChR composed of alpha-1/beta-1/gamma/delta subunits and central nervous system nAChR composed of alpha-4/beta-2 subunits, but not the peripheral nervous system nAChR composed of alpha-3/beta-4 subunits. In Conus spurius (Alphabet cone), this protein is Alpha-conotoxin SrIA/SrIB.